A 33-amino-acid chain; its full sequence is Dermonecrotic toxin LbSicTox-alphaIB1b (33 aa).

Residue His-11 is part of the active site. Glu-31 and Asp-33 together coordinate Mg(2+).

It belongs to the arthropod phospholipase D family. Class II subfamily. Mg(2+) serves as cofactor. In terms of processing, contains 2 disulfide bonds. Expressed by the venom gland.

The protein localises to the secreted. It catalyses the reaction an N-(acyl)-sphingosylphosphocholine = an N-(acyl)-sphingosyl-1,3-cyclic phosphate + choline. The enzyme catalyses an N-(acyl)-sphingosylphosphoethanolamine = an N-(acyl)-sphingosyl-1,3-cyclic phosphate + ethanolamine. It carries out the reaction a 1-acyl-sn-glycero-3-phosphocholine = a 1-acyl-sn-glycero-2,3-cyclic phosphate + choline. The catalysed reaction is a 1-acyl-sn-glycero-3-phosphoethanolamine = a 1-acyl-sn-glycero-2,3-cyclic phosphate + ethanolamine. In terms of biological role, dermonecrotic toxins cleave the phosphodiester linkage between the phosphate and headgroup of certain phospholipids (sphingolipid and lysolipid substrates), forming an alcohol (often choline) and a cyclic phosphate. This toxin acts on sphingomyelin (SM) with high activity (9.5 U/mg). It may also act on ceramide phosphoethanolamine (CPE), lysophosphatidylcholine (LPC) and lysophosphatidylethanolamine (LPE), but not on lysophosphatidylserine (LPS), and lysophosphatidylglycerol (LPG). It acts by transphosphatidylation, releasing exclusively cyclic phosphate products as second products. Induces dermonecrosis, hemolysis, increased vascular permeability, edema, inflammatory response, and platelet aggregation. The polypeptide is Dermonecrotic toxin LbSicTox-alphaIB1b (Loxosceles boneti (North American fiddleback spider)).